Reading from the N-terminus, the 507-residue chain is Putative histone deacetylase 2 (507 aa).

A histone deacetylase region spans residues 29-342 (RNVAYYYHKD…WALETGVILG (314 aa)). H162 is a catalytic residue. Positions 444-507 (EECFVEEDSK…RKDLNIPGIP (64 aa)) are disordered. Positions 482–501 (SHSDVIEEAKYEDRDRRKDL) are enriched in basic and acidic residues.

It belongs to the histone deacetylase family. HD type 1 subfamily. May be a component of a histone deacetylase complex containing saeg-2, saeg-1 and hda-2.

The protein resides in the nucleus. It carries out the reaction N(6)-acetyl-L-lysyl-[histone] + H2O = L-lysyl-[histone] + acetate. Functionally, probably responsible for the deacetylation of lysine residues on the N-terminal part of the core histones (H2A, H2B, H3 and H4). Histone deacetylation gives a tag for epigenetic repression and plays an important role in transcriptional regulation, cell cycle progression and developmental events. Histone deacetylases act via the formation of large multiprotein complexes. As a likely component of a histone deacetylase complex, together with saeg-1 and hda-2, functions downstream of the cAMP-dependent kinase egl-4 to regulate the expression of genes required for egg-laying and forgaging. In Caenorhabditis elegans, this protein is Putative histone deacetylase 2 (hda-2).